The following is a 269-amino-acid chain: UPF0354 protein YtpQ (269 aa).

This sequence belongs to the UPF0354 family.

In Bacillus subtilis (strain 168), this protein is UPF0354 protein YtpQ (ytpQ).